Reading from the N-terminus, the 216-residue chain is Octanoyltransferase (216 aa).

Residues 34–209 form the BPL/LPL catalytic domain; it reads ENTIDEIWLV…KMNQQLDYSH (176 aa). Substrate contacts are provided by residues 73 to 80, 140 to 142, and 153 to 155; these read RGGQITFH, SLG, and GLA. The active-site Acyl-thioester intermediate is Cys171.

Belongs to the LipB family.

The protein resides in the cytoplasm. The catalysed reaction is octanoyl-[ACP] + L-lysyl-[protein] = N(6)-octanoyl-L-lysyl-[protein] + holo-[ACP] + H(+). It functions in the pathway protein modification; protein lipoylation via endogenous pathway; protein N(6)-(lipoyl)lysine from octanoyl-[acyl-carrier-protein]: step 1/2. Its function is as follows. Catalyzes the transfer of endogenously produced octanoic acid from octanoyl-acyl-carrier-protein onto the lipoyl domains of lipoate-dependent enzymes. Lipoyl-ACP can also act as a substrate although octanoyl-ACP is likely to be the physiological substrate. The sequence is that of Octanoyltransferase from Psychromonas ingrahamii (strain DSM 17664 / CCUG 51855 / 37).